The sequence spans 435 residues: GTPase Der (435 aa).

EngA-type G domains lie at Pro-3–Asp-168 and Val-176–Arg-351. GTP-binding positions include Gly-9–Ser-16, Asp-56–Tyr-60, Asn-120–Asp-123, Gly-182–Ser-189, Asp-229–Leu-233, and Asn-294–Asp-297. The KH-like domain occupies Met-352–Lys-435.

Belongs to the TRAFAC class TrmE-Era-EngA-EngB-Septin-like GTPase superfamily. EngA (Der) GTPase family. Associates with the 50S ribosomal subunit.

GTPase that plays an essential role in the late steps of ribosome biogenesis. The sequence is that of GTPase Der from Chloroherpeton thalassium (strain ATCC 35110 / GB-78).